The chain runs to 320 residues: Putative malonate transporter (320 aa).

Transmembrane regions (helical) follow at residues 1–21, 32–52, 65–85, 113–133, 167–187, 196–216, 256–276, and 289–309; these read MAEITGLVLPFFGLIFLGYLT, MGWLNTFIVYLALPALFFKLV, FILTSVGTTYVVFALIFAIGL, GLALLALGETAAVPVALIFCF, IAFHPFILSTFAGVAAAFLSF, LIDYLAQAAAPCALFAMGVTL, IWVQTAVLLASLPTATNVFVI, and ATILITTLLSVATVTGLLYLI.

This sequence belongs to the auxin efflux carrier (TC 2.A.69) family.

It localises to the cell membrane. The polypeptide is Putative malonate transporter (mdcF) (Rhizobium meliloti (strain 1021) (Ensifer meliloti)).